We begin with the raw amino-acid sequence, 118 residues long: Large ribosomal subunit protein uL22 (118 aa).

Belongs to the universal ribosomal protein uL22 family. As to quaternary structure, part of the 50S ribosomal subunit.

Its function is as follows. This protein binds specifically to 23S rRNA; its binding is stimulated by other ribosomal proteins, e.g. L4, L17, and L20. It is important during the early stages of 50S assembly. It makes multiple contacts with different domains of the 23S rRNA in the assembled 50S subunit and ribosome. In terms of biological role, the globular domain of the protein is located near the polypeptide exit tunnel on the outside of the subunit, while an extended beta-hairpin is found that lines the wall of the exit tunnel in the center of the 70S ribosome. The protein is Large ribosomal subunit protein uL22 of Synechococcus sp. (strain RCC307).